The chain runs to 341 residues: S-adenosylmethionine:tRNA ribosyltransferase-isomerase (341 aa).

The protein belongs to the QueA family. Monomer.

Its subcellular location is the cytoplasm. It catalyses the reaction 7-aminomethyl-7-carbaguanosine(34) in tRNA + S-adenosyl-L-methionine = epoxyqueuosine(34) in tRNA + adenine + L-methionine + 2 H(+). It participates in tRNA modification; tRNA-queuosine biosynthesis. Functionally, transfers and isomerizes the ribose moiety from AdoMet to the 7-aminomethyl group of 7-deazaguanine (preQ1-tRNA) to give epoxyqueuosine (oQ-tRNA). The chain is S-adenosylmethionine:tRNA ribosyltransferase-isomerase from Chlorobium chlorochromatii (strain CaD3).